A 160-amino-acid chain; its full sequence is Cytochrome b6-f complex subunit 4 (160 aa).

The next 3 membrane-spanning stretches (helical) occupy residues 36–56 (LLYI…GLAI), 95–115 (LLGV…PFLE), and 131–151 (TVFL…TLPI).

It belongs to the cytochrome b family. PetD subfamily. As to quaternary structure, the 4 large subunits of the cytochrome b6-f complex are cytochrome b6, subunit IV (17 kDa polypeptide, petD), cytochrome f and the Rieske protein, while the 4 small subunits are petG, petL, petM and petN. The complex functions as a dimer.

The protein resides in the plastid. Its subcellular location is the chloroplast thylakoid membrane. In terms of biological role, component of the cytochrome b6-f complex, which mediates electron transfer between photosystem II (PSII) and photosystem I (PSI), cyclic electron flow around PSI, and state transitions. The chain is Cytochrome b6-f complex subunit 4 from Acorus calamus (Sweet flag).